The chain runs to 380 residues: Adaptive-response sensory kinase SasA (380 aa).

The kaiB-like domain, interacts with KaiC stretch occupies residues 20–101 (LLFVANRPGD…QKVDYWWPRW (82 aa)). The Histidine kinase domain occupies 157-380 (LLAHELRNPL…CFHFTLPVYS (224 aa)). Histidine 160 bears the Phosphohistidine; by autocatalysis mark.

As to quaternary structure, homotrimer with a small amount of possible homohexamer; a protein fragment of 109-380 is also a homotrimer. Interacts with KaiC, probably as 1 SasA trimer:1 KaiC homohexamer; unphosphorylated SasA has the highest affinity. Homodimer. Binds to the B-loop in the CI domain of KaiC; SasA and KaiB(fs) compete to bind to the CI domain. Binds preferentially to doubly phosphorylated KaiC. Autophosphorylates, probably on His-160.

It carries out the reaction ATP + protein L-histidine = ADP + protein N-phospho-L-histidine.. Functionally, member of the two-component regulatory system SasA/RpaA involved in genome-wide circadian gene expression. One of several clock output pathways. Participates in the Kai clock protein complex, the main circadian regulator in cyanobacteria, via its interaction with KaiC. KaiC enhances the autophosphorylation activity of SasA, which then transfers its phosphate group to RpaA to activate it. In addition to its output function, recruits fold-shifted KaiB (KaiB(fs)) to KaiC to cooperatively form the KaiB(6):KaiC(6) complex (independent of SasA kinase activity). Required for robustness of the circadian rhythm of gene expression and is involved in clock output, also required for adaptation to light/dark cycles. The sequence is that of Adaptive-response sensory kinase SasA from Thermosynechococcus vestitus (strain NIES-2133 / IAM M-273 / BP-1).